The following is a 142-amino-acid chain: Peptide methionine sulfoxide reductase MsrB (142 aa).

A MsrB domain is found at 2-125 (IKKDKNELNE…NSAAIQFIPY (124 aa)). Cys-114 serves as the catalytic Nucleophile.

The protein belongs to the MsrB Met sulfoxide reductase family.

The catalysed reaction is L-methionyl-[protein] + [thioredoxin]-disulfide + H2O = L-methionyl-(R)-S-oxide-[protein] + [thioredoxin]-dithiol. The protein is Peptide methionine sulfoxide reductase MsrB of Staphylococcus haemolyticus (strain JCSC1435).